Consider the following 139-residue polypeptide: Large ribosomal subunit protein uL13 (139 aa).

This sequence belongs to the universal ribosomal protein uL13 family. In terms of assembly, part of the 50S ribosomal subunit.

Functionally, this protein is one of the early assembly proteins of the 50S ribosomal subunit, although it is not seen to bind rRNA by itself. It is important during the early stages of 50S assembly. The chain is Large ribosomal subunit protein uL13 from Methanococcoides burtonii (strain DSM 6242 / NBRC 107633 / OCM 468 / ACE-M).